Consider the following 370-residue polypeptide: Neutral protease 2 homolog AFUB_070680 (370 aa).

A signal peptide spans 1–19 (MKVTILASAILALINGALA). A propeptide spanning residues 20-172 (LPANTPTLDV…PQAIKLLDRR (153 aa)) is cleaved from the precursor. 2 cysteine pairs are disulfide-bonded: Cys-178/Cys-250 and Cys-257/Cys-275. A Zn(2+)-binding site is contributed by His-300. The active site involves Glu-301. Zn(2+) is bound by residues His-304 and Asp-315.

This sequence belongs to the peptidase M35 family. Zn(2+) is required as a cofactor.

The protein localises to the secreted. It carries out the reaction Preferential cleavage of bonds with hydrophobic residues in P1'. Also 3-Asn-|-Gln-4 and 8-Gly-|-Ser-9 bonds in insulin B chain.. Its function is as follows. Secreted metalloproteinase that allows assimilation of proteinaceous substrates. Shows high activities on basic nuclear substrates such as histone and protamine. May be involved in virulence. This chain is Neutral protease 2 homolog AFUB_070680, found in Aspergillus fumigatus (strain CBS 144.89 / FGSC A1163 / CEA10) (Neosartorya fumigata).